We begin with the raw amino-acid sequence, 204 residues long: Large ribosomal subunit protein eL15 (204 aa).

This sequence belongs to the eukaryotic ribosomal protein eL15 family. Component of the large ribosomal subunit.

It is found in the cytoplasm. Component of the large ribosomal subunit. The ribosome is a large ribonucleoprotein complex responsible for the synthesis of proteins in the cell. This is Large ribosomal subunit protein eL15 (rpl15) from Tachysurus fulvidraco (Yellow catfish).